Reading from the N-terminus, the 201-residue chain is NAD(P)H dehydrogenase (quinone) (201 aa).

The Flavodoxin-like domain maps to 4 to 191; that stretch reads VLVLYYSMYG…KIAKCQGVHV (188 aa). Residues 10 to 15 and 79 to 81 contribute to the FMN site; these read SMYGHV and TRF. Residue tyrosine 12 participates in NAD(+) binding. Position 99 (tryptophan 99) interacts with substrate. FMN is bound by residues 114 to 120 and histidine 135; that span reads STGTQHG.

It belongs to the WrbA family. FMN is required as a cofactor.

It carries out the reaction a quinone + NADH + H(+) = a quinol + NAD(+). The catalysed reaction is a quinone + NADPH + H(+) = a quinol + NADP(+). This Hydrogenovibrio crunogenus (strain DSM 25203 / XCL-2) (Thiomicrospira crunogena) protein is NAD(P)H dehydrogenase (quinone).